Consider the following 101-residue polypeptide: Small ribosomal subunit protein uS14 (101 aa).

This sequence belongs to the universal ribosomal protein uS14 family. As to quaternary structure, part of the 30S ribosomal subunit. Contacts proteins S3 and S10.

Functionally, binds 16S rRNA, required for the assembly of 30S particles and may also be responsible for determining the conformation of the 16S rRNA at the A site. This Wigglesworthia glossinidia brevipalpis protein is Small ribosomal subunit protein uS14.